Consider the following 138-residue polypeptide: uncharacterized protein (138 aa).

This is an uncharacterized protein from Acanthamoeba polyphaga mimivirus (APMV).